The primary structure comprises 59 residues: uncharacterized protein (59 aa).

33–40 (GRRRVGKT) provides a ligand contact to ATP.

This is an uncharacterized protein from Methanocaldococcus jannaschii (strain ATCC 43067 / DSM 2661 / JAL-1 / JCM 10045 / NBRC 100440) (Methanococcus jannaschii).